A 539-amino-acid polypeptide reads, in one-letter code: Zinc finger and BTB domain-containing protein 7B (539 aa).

In terms of domain architecture, BTB spans 34–115 (CDLTIRTQGL…AYTATLTTSS (82 aa)). Serine 150 carries the phosphoserine modification. The interval 171-308 (ASGVPNGEDS…SPEELGSDED (138 aa)) is disordered. The span at 182–196 (PQVPLPPPPPPPPRP) shows a compositional bias: pro residues. Over residues 197–206 (VARRSRKPRK) the composition is skewed to basic residues. N6-acetyllysine; by EP300; alternate occurs at positions 206 and 212. Residues lysine 206 and lysine 212 each participate in a glycyl lysine isopeptide (Lys-Gly) (interchain with G-Cter in ubiquitin); alternate cross-link. Over residues 273–282 (YEGEEEEEEL) the composition is skewed to acidic residues. The residue at position 335 (lysine 335) is an N6-acetyllysine; by EP300; alternate. Lysine 335 is covalently cross-linked (Glycyl lysine isopeptide (Lys-Gly) (interchain with G-Cter in ubiquitin); alternate). Positions 344–400 (MPQECPVCHKIIHGAGKLPRHMRTHTGEKPFACEVCGVRFTRNDKLKIHMRKHTGER) are required for interaction with and acetylation by EP300. Residues 346–368 (QECPVCHKIIHGAGKLPRHMRTH) form a C2H2-type 1 zinc finger. A Phosphothreonine modification is found at threonine 369. C2H2-type zinc fingers lie at residues 374–396 (FACE…MRKH) and 402–424 (YSCP…MHLH). The C2H2-type 4; atypical zinc-finger motif lies at 430-454 (YECHLCHKAFAKEDHLQRHLKGQNC). 2 disordered regions span residues 458 to 486 (RTRR…GLDL) and 501 to 539 (FWEQ…MESS). Residues 508 to 517 (TGPPVSTPGP) are compositionally biased toward pro residues.

As to quaternary structure, homodimerizes. Interacts with NCL, NEDD4 and YBX1. Interacts with HNRNPU (via RNA-binding RGG-box region); the interaction facilitates the recruitment of long non-coding RNA Blnc1 by ZBTB7B. Interacts with HDAC4 and HDAC5; the interaction allows the recruitment of HDAC4 and HDAC5 on CD8 loci for deacetylation and possible inhibition of CD8 genes expression. Post-translationally, acetylated directly and specifically by EP300. EP300-mediated acetylation of Lys-206, Lys-212 and Lys-335 stabilizes the protein by antagonizing ubiquitin conjugation. In terms of processing, ubiquitinated, leading to proteasomal degradation. Competes with acetylation on Lys-206, Lys-212 and Lys-335.

It is found in the nucleus. Transcription regulator that acts as a key regulator of lineage commitment of immature T-cell precursors. Exerts distinct biological functions in the mammary epithelial cells and T cells in a tissue-specific manner. Necessary and sufficient for commitment of CD4 lineage, while its absence causes CD8 commitment. Development of immature T-cell precursors (thymocytes) to either the CD4 helper or CD8 killer T-cell lineages correlates precisely with their T-cell receptor specificity for major histocompatibility complex class II or class I molecules, respectively. Cross-antagonism between ZBTB7B and CBF complexes are determinative to CD4 versus CD8 cell fate decision. Suppresses RUNX3 expression and imposes CD4+ lineage fate by inducing the SOCS suppressors of cytokine signaling. induces, as a transcriptional activator, SOCS genes expression which represses RUNX3 expression and promotes the CD4+ lineage fate. During CD4 lineage commitment, associates with multiple sites at the CD8 locus, acting as a negative regulator of the CD8 promoter and enhancers by epigenetic silencing through the recruitment of class II histone deacetylases, such as HDAC4 and HDAC5, to these loci. Regulates the development of IL17-producing CD1d-restricted naural killer (NK) T cells. Also functions as an important metabolic regulator in the lactating mammary glands. Critical feed-forward regulator of insulin signaling in mammary gland lactation, directly regulates expression of insulin receptor substrate-1 (IRS-1) and insulin-induced Akt-mTOR-SREBP signaling. Transcriptional repressor of the collagen COL1A1 and COL1A2 genes. May also function as a repressor of fibronectin and possibly other extracellular matrix genes. Potent driver of brown fat development, thermogenesis and cold-induced beige fat formation. Recruits the brown fat lncRNA 1 (Blnc1):HNRNPU ribonucleoprotein complex to activate thermogenic gene expression in brown and beige adipocytes. The chain is Zinc finger and BTB domain-containing protein 7B from Homo sapiens (Human).